Here is a 753-residue protein sequence, read N- to C-terminus: Cell cycle progression protein 1 (753 aa).

Over 1–218 (MSESSSDSDS…KRHFSRGLNK (218 aa)) the chain is Cytoplasmic. An interaction with MCF2L and SRC region spans residues 1 to 307 (MSESSSDSDS…QKKNLAAENQ (307 aa)). The segment at 57–211 (HGGEESSANN…EPSKEPSKRH (155 aa)) is disordered. 2 stretches are compositionally biased toward polar residues: residues 62–78 (SSAN…LSSM) and 122–138 (QEVT…LNMG). Residues 176-185 (PRRRRNRKKT) show a composition bias toward basic residues. A Phosphoserine modification is found at Ser-187. Over residues 190–201 (ESEEPPLAEPED) the composition is skewed to acidic residues. A helical; Signal-anchor for type II membrane protein membrane pass occupies residues 219 to 239 (CVILALVIAVSMGFGHFYGTI). Topologically, residues 240–753 (QIQKQLVRKT…YIKPCYYNSF (514 aa)) are lumenal. The stretch at 298 to 449 (QKKNLAAENQ…EQQRSDLWER (152 aa)) forms a coiled coil. Basic and acidic residues predominate over residues 457–467 (QHGKQETDGRK). The interval 457-484 (QHGKQETDGRKRGSRGSHRAKSKSKETF) is disordered. Positions 468–478 (RGSRGSHRAKS) are enriched in basic residues. Positions 503–529 (VRHHKEKIKQAKEAVKENLKKFSDSVK) form a coiled coil. Over residues 553–563 (APKEAATEKTR) the composition is skewed to basic and acidic residues. Residues 553–606 (APKEAATEKTRTAYSYSSYSQQEAPNQNQNCRRPSAQRDGGREKPSHSEEIRKN) form a disordered region. A compositionally biased stretch (polar residues) spans 573-584 (QQEAPNQNQNCR). Over residues 591 to 605 (DGGREKPSHSEEIRK) the composition is skewed to basic and acidic residues.

Belongs to the CCPG1 family. As to quaternary structure, interacts with MCF2L. May interact with MCF2, ARHGEF1, BCR, VAV1 and FGD1, but not with TIAM1. Interacts with GTP-bound CDC42 and SRC.

The protein localises to the cytoplasmic granule membrane. In terms of biological role, acts as an assembly platform for Rho protein signaling complexes. Limits guanine nucleotide exchange activity of MCF2L toward RHOA, which results in an inhibition of both its transcriptional activation ability and its transforming activity. Does not inhibit activity of MCF2L toward CDC42, or activity of MCF2 toward either RHOA or CDC42. May be involved in cell cycle regulation. The sequence is that of Cell cycle progression protein 1 (Ccpg1) from Mus musculus (Mouse).